We begin with the raw amino-acid sequence, 205 residues long: 3-isopropylmalate dehydratase small subunit (205 aa).

It belongs to the LeuD family. LeuD type 1 subfamily. In terms of assembly, heterodimer of LeuC and LeuD.

It carries out the reaction (2R,3S)-3-isopropylmalate = (2S)-2-isopropylmalate. It functions in the pathway amino-acid biosynthesis; L-leucine biosynthesis; L-leucine from 3-methyl-2-oxobutanoate: step 2/4. Functionally, catalyzes the isomerization between 2-isopropylmalate and 3-isopropylmalate, via the formation of 2-isopropylmaleate. The polypeptide is 3-isopropylmalate dehydratase small subunit (Christiangramia forsetii (strain DSM 17595 / CGMCC 1.15422 / KT0803) (Gramella forsetii)).